A 287-amino-acid polypeptide reads, in one-letter code: Inorganic pyrophosphatase (287 aa).

Arg-79 is a diphosphate binding site. Mg(2+)-binding residues include Asp-116, Asp-121, and Asp-153.

The protein belongs to the PPase family. The cofactor is Mg(2+).

The protein localises to the cytoplasm. The enzyme catalyses diphosphate + H2O = 2 phosphate + H(+). The sequence is that of Inorganic pyrophosphatase (IPP1) from Debaryomyces hansenii (strain ATCC 36239 / CBS 767 / BCRC 21394 / JCM 1990 / NBRC 0083 / IGC 2968) (Yeast).